Consider the following 127-residue polypeptide: Anti-adapter protein IraD (127 aa).

This sequence belongs to the GpW/Gp25 family. IraD subfamily. In terms of assembly, interacts with RssB.

Its subcellular location is the cytoplasm. In terms of biological role, inhibits RpoS proteolysis by regulating RssB activity, thereby increasing the stability of the sigma stress factor RpoS during oxidative stress. Its effect on RpoS stability is due to its interaction with RssB, which probably blocks the interaction of RssB with RpoS, and the consequent delivery of the RssB-RpoS complex to the ClpXP protein degradation pathway. In Escherichia coli O6:H1 (strain CFT073 / ATCC 700928 / UPEC), this protein is Anti-adapter protein IraD.